A 392-amino-acid chain; its full sequence is Phospho-N-acetylmuramoyl-pentapeptide-transferase (392 aa).

The next 10 helical transmembrane spans lie at 24–44, 76–96, 100–120, 137–157, 193–213, 225–245, 262–282, 289–309, 314–334, and 369–389; these read YLTF…LLAG, TMGG…WFDL, FVWV…VDDW, YFWQ…CISE, VSYP…IVGS, GLAI…AYVT, AGEL…FLWF, VFMG…IAII, IVLA…MLQV, and QVVV…LTTL.

The protein belongs to the glycosyltransferase 4 family. MraY subfamily. Mg(2+) is required as a cofactor.

The protein resides in the cell inner membrane. It carries out the reaction UDP-N-acetyl-alpha-D-muramoyl-L-alanyl-gamma-D-glutamyl-meso-2,6-diaminopimeloyl-D-alanyl-D-alanine + di-trans,octa-cis-undecaprenyl phosphate = di-trans,octa-cis-undecaprenyl diphospho-N-acetyl-alpha-D-muramoyl-L-alanyl-D-glutamyl-meso-2,6-diaminopimeloyl-D-alanyl-D-alanine + UMP. It participates in cell wall biogenesis; peptidoglycan biosynthesis. In terms of biological role, catalyzes the initial step of the lipid cycle reactions in the biosynthesis of the cell wall peptidoglycan: transfers peptidoglycan precursor phospho-MurNAc-pentapeptide from UDP-MurNAc-pentapeptide onto the lipid carrier undecaprenyl phosphate, yielding undecaprenyl-pyrophosphoryl-MurNAc-pentapeptide, known as lipid I. The sequence is that of Phospho-N-acetylmuramoyl-pentapeptide-transferase from Paracidovorax citrulli (strain AAC00-1) (Acidovorax citrulli).